A 212-amino-acid chain; its full sequence is Thymidylate kinase (212 aa).

Gly10–Thr17 lines the ATP pocket.

Belongs to the thymidylate kinase family.

The catalysed reaction is dTMP + ATP = dTDP + ADP. In terms of biological role, phosphorylation of dTMP to form dTDP in both de novo and salvage pathways of dTTP synthesis. This chain is Thymidylate kinase, found in Yersinia pseudotuberculosis serotype O:1b (strain IP 31758).